The following is a 379-amino-acid chain: Chaperone protein DnaJ (379 aa).

In terms of domain architecture, J spans 5–69; the sequence is DYYEVLGISK…NKRASYDQFG (65 aa). The CR-type zinc-finger motif lies at 136–218; it reads GTTKEISIRK…CHGKGTENKT (83 aa). Positions 149, 152, 166, 169, 192, 195, 206, and 209 each coordinate Zn(2+). CXXCXGXG motif repeat units follow at residues 149-156, 166-173, 192-199, and 206-213; these read CETCHGDG, CSYCNGAG, CPKCNGSG, and CPTCHGKG.

Belongs to the DnaJ family. Homodimer. Zn(2+) is required as a cofactor.

The protein resides in the cytoplasm. Functionally, participates actively in the response to hyperosmotic and heat shock by preventing the aggregation of stress-denatured proteins and by disaggregating proteins, also in an autonomous, DnaK-independent fashion. Unfolded proteins bind initially to DnaJ; upon interaction with the DnaJ-bound protein, DnaK hydrolyzes its bound ATP, resulting in the formation of a stable complex. GrpE releases ADP from DnaK; ATP binding to DnaK triggers the release of the substrate protein, thus completing the reaction cycle. Several rounds of ATP-dependent interactions between DnaJ, DnaK and GrpE are required for fully efficient folding. Also involved, together with DnaK and GrpE, in the DNA replication of plasmids through activation of initiation proteins. This is Chaperone protein DnaJ from Staphylococcus aureus (strain bovine RF122 / ET3-1).